Consider the following 370-residue polypeptide: Putative agmatine deiminase (370 aa).

Residue C361 is the Amidino-cysteine intermediate of the active site.

The protein belongs to the agmatine deiminase family.

It carries out the reaction agmatine + H2O = N-carbamoylputrescine + NH4(+). The polypeptide is Putative agmatine deiminase (Shewanella baltica (strain OS185)).